Here is a 260-residue protein sequence, read N- to C-terminus: Glutathione S-transferase domain-containing protein DDB_G0274223 (260 aa).

In terms of domain architecture, GST N-terminal spans 7–96 (KVDYIFYTNN…YLAQKYNTFL (90 aa)). In terms of domain architecture, GST C-terminal spans 102–233 (NPHENSDVIT…GFKTFNPSAL (132 aa)).

The protein belongs to the GST superfamily.

The protein is Glutathione S-transferase domain-containing protein DDB_G0274223 of Dictyostelium discoideum (Social amoeba).